Reading from the N-terminus, the 330-residue chain is mRNA-capping enzyme (330 aa).

Lys82 functions as the N6-GMP-lysine intermediate in the catalytic mechanism.

The protein belongs to the eukaryotic GTase family. Monomer. Requires Mg(2+) as cofactor. The cofactor is Mn(2+).

It catalyses the reaction a 5'-end diphospho-ribonucleoside in mRNA + GTP + H(+) = a 5'-end (5'-triphosphoguanosine)-ribonucleoside in mRNA + diphosphate. Functionally, mRNA capping. Transfers a GMP cap onto the end of mRNA that terminates with a 5'-diphosphate tail. In Chlorella (PBCV-1), this protein is mRNA-capping enzyme.